The chain runs to 51 residues: uncharacterized protein (51 aa).

The protein to E.coli YdaF.

This is an uncharacterized protein from Escherichia coli O157:H7.